A 123-amino-acid polypeptide reads, in one-letter code: MAYSKLGRTSSQRKALLRDLATDLIINERIQTTEQKAKELRPVVEKLITLGKRGDLHARRQVASFVRREAAGQNEAGKTQDAIQKLFADVAPRFAERQGGYTRIMKMGPRRGDGAEMVIIELV.

This sequence belongs to the bacterial ribosomal protein bL17 family. In terms of assembly, part of the 50S ribosomal subunit. Contacts protein L32.

The sequence is that of Large ribosomal subunit protein bL17 from Exiguobacterium sibiricum (strain DSM 17290 / CCUG 55495 / CIP 109462 / JCM 13490 / 255-15).